The chain runs to 439 residues: Homogentisate 1,2-dioxygenase (439 aa).

His-289 functions as the Proton acceptor in the catalytic mechanism. Positions 332 and 338 each coordinate Fe cation. Homogentisate contacts are provided by Tyr-347 and His-368. Residue His-368 coordinates Fe cation.

The protein belongs to the homogentisate dioxygenase family. In terms of assembly, hexamer; dimer of trimers. Fe cation serves as cofactor.

It carries out the reaction homogentisate + O2 = 4-maleylacetoacetate + H(+). It functions in the pathway amino-acid degradation; L-phenylalanine degradation; acetoacetate and fumarate from L-phenylalanine: step 4/6. In terms of biological role, involved in the catabolism of homogentisate (2,5-dihydroxyphenylacetate or 2,5-OH-PhAc), a central intermediate in the degradation of phenylalanine and tyrosine. Catalyzes the oxidative ring cleavage of the aromatic ring of homogentisate to yield maleylacetoacetate. The chain is Homogentisate 1,2-dioxygenase from Xanthomonas euvesicatoria pv. vesicatoria (strain 85-10) (Xanthomonas campestris pv. vesicatoria).